The chain runs to 447 residues: Phosphoglucosamine mutase (447 aa).

S102 serves as the catalytic Phosphoserine intermediate. Mg(2+)-binding residues include S102, D241, D243, and D245. Residue S102 is modified to Phosphoserine.

The protein belongs to the phosphohexose mutase family. Mg(2+) serves as cofactor. Activated by phosphorylation.

The catalysed reaction is alpha-D-glucosamine 1-phosphate = D-glucosamine 6-phosphate. In terms of biological role, catalyzes the conversion of glucosamine-6-phosphate to glucosamine-1-phosphate. The sequence is that of Phosphoglucosamine mutase from Pseudomonas syringae pv. syringae (strain B728a).